The chain runs to 185 residues: Elongation factor P (185 aa).

This sequence belongs to the elongation factor P family.

Its subcellular location is the cytoplasm. The protein operates within protein biosynthesis; polypeptide chain elongation. In terms of biological role, involved in peptide bond synthesis. Stimulates efficient translation and peptide-bond synthesis on native or reconstituted 70S ribosomes in vitro. Probably functions indirectly by altering the affinity of the ribosome for aminoacyl-tRNA, thus increasing their reactivity as acceptors for peptidyl transferase. This Bordetella avium (strain 197N) protein is Elongation factor P.